The following is a 306-amino-acid chain: MERIPASAGPEAIFEAFRRDGIIVIEGFLTPDQVQRFSSEVQPGLDELTVGAPEHDEAAQTATVMDEMIGEKTKRLGQLVTRSAVFRHELLEHELMHALLEKVFVEGPMDGYWMNASEVIEIAPGSNAQPIHRDQELYDVWNRAGPAMPEAICNFISALTPFTALNGATQVAPGTHRDFTSDHLLDRDFQGRSDLKTIPAVMNPGDCIFFSGKILHGGGANHTADELRRGLAMSFIRRILTPEEAHPLSVSREIVDTMTYRGQAMLGFRSQWPVIEGVPNFYWTHQGSEIGSHIGLKEKTSGSVVL.

Residues His-132, Asp-134, and His-216 each contribute to the Fe cation site.

This sequence belongs to the PhyH family. In terms of assembly, homodimer. Requires Fe cation as cofactor.

The enzyme catalyses (1S,4S)-4-[(4-methoxyphenyl)methyl]-2-methyl-2,5-diazaspiro[bicyclo[3.2.1]octane-6,1'-cyclohexan]-4'-one + 2-oxoglutarate + O2 = (2S)-3-(4-methoxyphenyl)-2-[(3S)-3-(methylamino)-8-oxo-1-azaspiro[4.5]decan-1-yl]propanal + succinate + CO2. Its pathway is secondary metabolite biosynthesis. In terms of biological role, dioxygenase; part of the gene cluster that mediates the biosynthesis of the alkaloid (-)-FR901483, a potent immunosuppressant that shows efficacy in animal models and a probable inhibitor of purine nucleotide biosynthesis by targeting phosphoribosylpyrophosphate amidotransferase (PPAT). Within the pathway, FrzG cleaves the C9-N10' bond to yield a conjugated iminium. FrzG is also able to catalyze the dehydrogenation between C7 and C8 which leads to a shunt product. The biosynthesis of (-)-FR901483 starts with the condensation of two L-tyrosines to yield (S,S)-dityrosyl-piperazine. This process occurs in 3 steps with the non-canonical nonribosomal peptide synthetase FrzA catalyzing the reduction of L-tyrosine into L-tyrosinal, the spontaneous condensation of 2 L-tyrosinal units, and the subsequent reduction by the NmrA-like family domain-containing oxidoreductase FrzB. The cytochrome P450 monooxygenase FrzC then performs coupling between N10 and C1' to morph the piperazine into a 1,4-diazabicyclo[3.2.1]octane spiro-fused to a 2,5-cyclohexadienone. The dienone portion is further reduced to cyclohexanone by the flavin-dependent reductase FrzD. The methyltranserases (MTs) FrzE and FrzF are then involved in the methylation at the C10' amine and the C4 phenolic oxygen, respectively. The order of the two MTs appear to be interchangeable. Cleavage of the C9-N10' bond by the dioxygenase FrzG then leads to formation of a conjugated iminium. In addition to the oxidation of C9, an additional dehydrogenation between C7 and C8 can occur to give a likely shunt product. The next biosynthetic step is the intramolecular aldol condensation catalyzed by the newly identified aldolase FrzH to yield an aza-tricyclic product with the formation of a C9-C3' bond. The short-chain dehydrogenase/reductase FrzI then produces dephospho-(-)-FR901483 that is phosphorylated at C4'-OH into (-)-FR901483 by the phosphotransferase FrzJ. This Cladobotryum sp protein is Dioxygenase FrzG.